Consider the following 947-residue polypeptide: Transcriptional regulator WAR1 (947 aa).

A compositionally biased stretch (basic and acidic residues) spans 1 to 10 (MSDTTPEKGS). The interval 1–52 (MSDTTPEKGSVDSVSPSASNGSNTNNPLNNSSPQPLKSNESDKKPKVTRRSV) is disordered. Residues 19–38 (SNGSNTNNPLNNSSPQPLKS) are compositionally biased toward low complexity. The zn(2)-C6 fungal-type DNA-binding region spans 54–86 (CKSCHSLKVKCTPSDPNNPSAPCVRCINANRIC). A disordered region spans residues 96–222 (RRKKSEILEA…SPTSKDDEIN (127 aa)). The span at 129–142 (NSSENYSSSINNAN) shows a compositional bias: low complexity. Composition is skewed to polar residues over residues 143-158 (DSSL…TFDP) and 167-185 (QASS…QSAA).

In terms of assembly, homodimer.

Its subcellular location is the nucleus. In terms of biological role, transcription factor required for yeast cell adherence to silicone substrate. Plays a role in resistance to weak organic acids such as acetate and sorbate. Binds in vitro to a nitric oxide-responsive element (NORE) but seems not to be involved in response to nitrosative stress. This chain is Transcriptional regulator WAR1 (WAR1), found in Candida albicans (strain SC5314 / ATCC MYA-2876) (Yeast).